Consider the following 489-residue polypeptide: Glutamyl-tRNA(Gln) amidotransferase subunit A (489 aa).

Active-site charge relay system residues include Lys-80 and Ser-160. The active-site Acyl-ester intermediate is the Ser-184.

The protein belongs to the amidase family. GatA subfamily. As to quaternary structure, heterotrimer of A, B and C subunits.

It catalyses the reaction L-glutamyl-tRNA(Gln) + L-glutamine + ATP + H2O = L-glutaminyl-tRNA(Gln) + L-glutamate + ADP + phosphate + H(+). Allows the formation of correctly charged Gln-tRNA(Gln) through the transamidation of misacylated Glu-tRNA(Gln) in organisms which lack glutaminyl-tRNA synthetase. The reaction takes place in the presence of glutamine and ATP through an activated gamma-phospho-Glu-tRNA(Gln). The protein is Glutamyl-tRNA(Gln) amidotransferase subunit A of Wolbachia pipientis wMel.